The following is a 65-amino-acid chain: Large ribosomal subunit protein bL35 (65 aa).

Belongs to the bacterial ribosomal protein bL35 family.

This is Large ribosomal subunit protein bL35 from Paraburkholderia phytofirmans (strain DSM 17436 / LMG 22146 / PsJN) (Burkholderia phytofirmans).